A 411-amino-acid chain; its full sequence is Citrate synthase (411 aa).

Catalysis depends on residues histidine 304 and aspartate 363.

It belongs to the citrate synthase family.

It catalyses the reaction oxaloacetate + acetyl-CoA + H2O = citrate + CoA + H(+). It functions in the pathway carbohydrate metabolism; tricarboxylic acid cycle; isocitrate from oxaloacetate: step 1/2. This is Citrate synthase (gltA) from Rickettsia parkeri.